The following is a 226-amino-acid chain: Putative uroporphyrinogen-III synthase (226 aa).

This sequence belongs to the uroporphyrinogen-III synthase family.

It carries out the reaction hydroxymethylbilane = uroporphyrinogen III + H2O. It participates in porphyrin-containing compound metabolism; protoporphyrin-IX biosynthesis; coproporphyrinogen-III from 5-aminolevulinate: step 3/4. Functionally, catalyzes cyclization of the linear tetrapyrrole, hydroxymethylbilane, to the macrocyclic uroporphyrinogen III. In Archaeoglobus fulgidus (strain ATCC 49558 / DSM 4304 / JCM 9628 / NBRC 100126 / VC-16), this protein is Putative uroporphyrinogen-III synthase.